Reading from the N-terminus, the 363-residue chain is tRNA/tmRNA (uracil-C(5))-methyltransferase (363 aa).

The S-adenosyl-L-methionine site is built by Gln187, Tyr215, Asn220, Glu236, and Asp296. Cys321 serves as the catalytic Nucleophile. Glu355 functions as the Proton acceptor in the catalytic mechanism.

Belongs to the class I-like SAM-binding methyltransferase superfamily. RNA M5U methyltransferase family. TrmA subfamily.

The catalysed reaction is uridine(54) in tRNA + S-adenosyl-L-methionine = 5-methyluridine(54) in tRNA + S-adenosyl-L-homocysteine + H(+). It catalyses the reaction uridine(341) in tmRNA + S-adenosyl-L-methionine = 5-methyluridine(341) in tmRNA + S-adenosyl-L-homocysteine + H(+). Functionally, dual-specificity methyltransferase that catalyzes the formation of 5-methyluridine at position 54 (m5U54) in all tRNAs, and that of position 341 (m5U341) in tmRNA (transfer-mRNA). The chain is tRNA/tmRNA (uracil-C(5))-methyltransferase from Haemophilus influenzae (strain PittEE).